The primary structure comprises 220 residues: 7-cyano-7-deazaguanine synthase (220 aa).

ATP is bound at residue Ile7–Ala17. Zn(2+) is bound by residues Cys187, Cys195, Cys198, and Cys201.

The protein belongs to the QueC family. The cofactor is Zn(2+).

The catalysed reaction is 7-carboxy-7-deazaguanine + NH4(+) + ATP = 7-cyano-7-deazaguanine + ADP + phosphate + H2O + H(+). It functions in the pathway purine metabolism; 7-cyano-7-deazaguanine biosynthesis. Catalyzes the ATP-dependent conversion of 7-carboxy-7-deazaguanine (CDG) to 7-cyano-7-deazaguanine (preQ(0)). The protein is 7-cyano-7-deazaguanine synthase of Campylobacter hominis (strain ATCC BAA-381 / DSM 21671 / CCUG 45161 / LMG 19568 / NCTC 13146 / CH001A).